A 35-amino-acid polypeptide reads, in one-letter code: Surfactant protein C (35 aa).

S-palmitoyl cysteine attachment occurs at residues Cys-5 and Cys-6.

The protein localises to the secreted. The protein resides in the extracellular space. Its subcellular location is the surface film. Its function is as follows. Pulmonary surfactant associated proteins promote alveolar stability by lowering the surface tension at the air-liquid interface in the peripheral air spaces. This chain is Surfactant protein C (SFTPC), found in Sus scrofa (Pig).